We begin with the raw amino-acid sequence, 117 residues long: Large ribosomal subunit protein bL20c (117 aa).

Belongs to the bacterial ribosomal protein bL20 family.

The protein localises to the plastid. The protein resides in the chloroplast. Functionally, binds directly to 23S ribosomal RNA and is necessary for the in vitro assembly process of the 50S ribosomal subunit. It is not involved in the protein synthesizing functions of that subunit. This chain is Large ribosomal subunit protein bL20c, found in Manihot esculenta (Cassava).